We begin with the raw amino-acid sequence, 23 residues long: Aurein-4.1 (23 aa).

It belongs to the frog skin active peptide (FSAP) family. Aurein subfamily. Expressed by the skin dorsal glands.

Its subcellular location is the secreted. In terms of biological role, has no antimicrobial or anticancer activity. This chain is Aurein-4.1, found in Ranoidea aurea (Green and golden bell frog).